The sequence spans 390 residues: 1-deoxy-D-xylulose 5-phosphate reductoisomerase (390 aa).

Positions 10, 11, 12, 13, 36, 37, 38, and 121 each coordinate NADPH. K122 serves as a coordination point for 1-deoxy-D-xylulose 5-phosphate. E123 serves as a coordination point for NADPH. Residue D147 coordinates Mn(2+). Residues S148, E149, S173, and H196 each coordinate 1-deoxy-D-xylulose 5-phosphate. E149 contributes to the Mn(2+) binding site. G202 lines the NADPH pocket. Positions 209, 214, 215, and 218 each coordinate 1-deoxy-D-xylulose 5-phosphate. Residue E218 coordinates Mn(2+). The tract at residues A367–R390 is disordered. The segment covering E370–V380 has biased composition (basic and acidic residues).

This sequence belongs to the DXR family. It depends on Mg(2+) as a cofactor. Mn(2+) serves as cofactor.

The enzyme catalyses 2-C-methyl-D-erythritol 4-phosphate + NADP(+) = 1-deoxy-D-xylulose 5-phosphate + NADPH + H(+). Its pathway is isoprenoid biosynthesis; isopentenyl diphosphate biosynthesis via DXP pathway; isopentenyl diphosphate from 1-deoxy-D-xylulose 5-phosphate: step 1/6. Catalyzes the NADPH-dependent rearrangement and reduction of 1-deoxy-D-xylulose-5-phosphate (DXP) to 2-C-methyl-D-erythritol 4-phosphate (MEP). This chain is 1-deoxy-D-xylulose 5-phosphate reductoisomerase, found in Anaeromyxobacter dehalogenans (strain 2CP-1 / ATCC BAA-258).